The following is an 805-amino-acid chain: MNRYAVSSLVGQGSFGCVYKATRKDDSKVVAIKVISKRGRATKELKNLRRECDIQARLKHPHVIEMIESFESKTDLFVVTEFALMDLHRYLSYNGAMGEEPARRVTGHLVSALYYLHSNRILHRDLKPQNVLLDKNMHAKLCDFGLARNMTLGTHVLTSIKGTPLYMAPELLAEQPYDHHADMWSLGCIAYESMAGQPPFCASSILHLVKMIKHEDVKWPSTLTSECRSFLQGLLEKDPGLRISWTQLLCHPFVEGRIFIAETQAEAAKESPFTNPEAKVKSSKQSDPEVGDLDEALAALDFGESRQENLTTSRDSINAIAPSDVEHLETDVEDNMQRVVVPFADLSYRDLSGVRAMPMVHQPVINSHTCFVSGNSNMILNHMNDNFDFQASLRGGGVAAKPIVAPTVRQSRSKDLEKRKLSQNLDNFSVRLGHSVDHEAQRKATEIATQEKHNQENKPPAEAISYANSQPPQQQPQQLKHSMHSTNEEKLSSDNTPPCLLPGWDSCDESQSPPIENDEWLAFLNRSVQELLDGELDSLKQHNLVSIIVAPLRNSKAIPRVLKSVAQLLSLPFVLVDPVLIVDLELIRNVYVDVKLVPNLMYACKLLLSHKQLSDSAASAPLTTGSLSRTLRSIPELTVEELETACSLYELVCHLVHLQQQFLTQFCDAVAILAASDLFLNFLTHDFRQSDSDAASVRLAGCMLALMGCVLRELPENAELVERIVFNPRLNFVSLLQSRHHLLRQRSCQLLRLLARFSLRGVQRIWNGELRFALQQLSEHHSYPALRGEAAQTLDEISHFTFFVT.

A Protein kinase domain is found at 4 to 254 (YAVSSLVGQG…WTQLLCHPFV (251 aa)). ATP is bound by residues 10 to 18 (VGQGSFGCV) and Lys33. The active-site Proton acceptor is the Asp125. The segment at 269–289 (KESPFTNPEAKVKSSKQSDPE) is disordered. The span at 278–287 (AKVKSSKQSD) shows a compositional bias: basic and acidic residues. Ser422 and Ser429 each carry phosphoserine. Positions 447-456 (IATQEKHNQE) are enriched in basic and acidic residues. Residues 447-496 (IATQEKHNQENKPPAEAISYANSQPPQQQPQQLKHSMHSTNEEKLSSDNT) are disordered.

This sequence belongs to the protein kinase superfamily. Ser/Thr protein kinase family. As to expression, expressed in all imaginal disks, higher level in wing disk.

The catalysed reaction is L-seryl-[protein] + ATP = O-phospho-L-seryl-[protein] + ADP + H(+). The enzyme catalyses L-threonyl-[protein] + ATP = O-phospho-L-threonyl-[protein] + ADP + H(+). Its function is as follows. Probable serine/threonine-protein kinase; maternally required for correct patterning in the posterior part of each embryonic metamere. May be involved in control of cell division during metamorphosis and ovarian development. May interact with costal-2. This Drosophila melanogaster (Fruit fly) protein is Serine/threonine-protein kinase fused (fu).